A 481-amino-acid polypeptide reads, in one-letter code: Aspartyl/glutamyl-tRNA(Asn/Gln) amidotransferase subunit B (481 aa).

Belongs to the GatB/GatE family. GatB subfamily. Heterotrimer of A, B and C subunits.

It carries out the reaction L-glutamyl-tRNA(Gln) + L-glutamine + ATP + H2O = L-glutaminyl-tRNA(Gln) + L-glutamate + ADP + phosphate + H(+). The enzyme catalyses L-aspartyl-tRNA(Asn) + L-glutamine + ATP + H2O = L-asparaginyl-tRNA(Asn) + L-glutamate + ADP + phosphate + 2 H(+). Allows the formation of correctly charged Asn-tRNA(Asn) or Gln-tRNA(Gln) through the transamidation of misacylated Asp-tRNA(Asn) or Glu-tRNA(Gln) in organisms which lack either or both of asparaginyl-tRNA or glutaminyl-tRNA synthetases. The reaction takes place in the presence of glutamine and ATP through an activated phospho-Asp-tRNA(Asn) or phospho-Glu-tRNA(Gln). The polypeptide is Aspartyl/glutamyl-tRNA(Asn/Gln) amidotransferase subunit B (Fusobacterium nucleatum subsp. nucleatum (strain ATCC 25586 / DSM 15643 / BCRC 10681 / CIP 101130 / JCM 8532 / KCTC 2640 / LMG 13131 / VPI 4355)).